Reading from the N-terminus, the 322-residue chain is Malate dehydrogenase (322 aa).

Residues 10-15 (GSGQIG) and D34 each bind NAD(+). Substrate-binding residues include R83 and R89. NAD(+)-binding positions include N96 and 119-121 (ITN). N121 and R152 together coordinate substrate. H176 acts as the Proton acceptor in catalysis.

The protein belongs to the LDH/MDH superfamily. MDH type 3 family.

The catalysed reaction is (S)-malate + NAD(+) = oxaloacetate + NADH + H(+). In terms of biological role, catalyzes the reversible oxidation of malate to oxaloacetate. This Rhodopseudomonas palustris (strain HaA2) protein is Malate dehydrogenase.